A 73-amino-acid polypeptide reads, in one-letter code: DNA-directed RNA polymerase subunit omega (73 aa).

The protein belongs to the RNA polymerase subunit omega family. In terms of assembly, in cyanobacteria the RNAP catalytic core is composed of 2 alpha, 1 beta, 1 beta', 1 gamma and 1 omega subunit. When a sigma factor is associated with the core the holoenzyme is formed, which can initiate transcription.

The catalysed reaction is RNA(n) + a ribonucleoside 5'-triphosphate = RNA(n+1) + diphosphate. Its function is as follows. Promotes RNA polymerase assembly. Latches the N- and C-terminal regions of the beta' subunit thereby facilitating its interaction with the beta and alpha subunits. In Gloeobacter violaceus (strain ATCC 29082 / PCC 7421), this protein is DNA-directed RNA polymerase subunit omega.